We begin with the raw amino-acid sequence, 181 residues long: Segregation and condensation protein B (181 aa).

The protein belongs to the ScpB family. As to quaternary structure, homodimer. Homodimerization may be required to stabilize the binding of ScpA to the Smc head domains. Component of a cohesin-like complex composed of ScpA, ScpB and the Smc homodimer, in which ScpA and ScpB bind to the head domain of Smc. The presence of the three proteins is required for the association of the complex with DNA.

The protein resides in the cytoplasm. Functionally, participates in chromosomal partition during cell division. May act via the formation of a condensin-like complex containing Smc and ScpA that pull DNA away from mid-cell into both cell halves. In Desulforamulus reducens (strain ATCC BAA-1160 / DSM 100696 / MI-1) (Desulfotomaculum reducens), this protein is Segregation and condensation protein B.